Here is a 243-residue protein sequence, read N- to C-terminus: UPF0246 protein SpyM51747 (243 aa).

Belongs to the UPF0246 family.

The sequence is that of UPF0246 protein SpyM51747 from Streptococcus pyogenes serotype M5 (strain Manfredo).